We begin with the raw amino-acid sequence, 456 residues long: Chordin-like protein 1 (456 aa).

The N-terminal stretch at 1 to 28 (MRRKWRSEDFHFVFFGVLCLLLIDRGKL) is a signal peptide. VWFC domains are found at residues 36–101 (TYCV…PRCP), 115–181 (KSCE…PVCR), and 262–327 (RVCV…KVCP). N-linked (GlcNAc...) asparagine glycosylation occurs at N120. A Cell attachment site motif is present at residues 181–183 (RGD). N295 is a glycosylation site (N-linked (GlcNAc...) asparagine).

As to expression, mainly expressed in the ventral retina.

It is found in the secreted. Seems to antagonize the function of BMP4 by binding to it and preventing its interaction with receptors. The polypeptide is Chordin-like protein 1 (CHRDL1) (Gallus gallus (Chicken)).